Here is a 221-residue protein sequence, read N- to C-terminus: Endo-1,4-beta-xylanase 11A (221 aa).

The N-terminal stretch at 1-17 (MVSFTTLLTAVATAVSA) is a signal peptide. The 191-residue stretch at 28-218 (RGIQPGTGVH…SSGSAEIEVR (191 aa)) folds into the GH11 domain. Residue N89 is glycosylated (N-linked (GlcNAc...) asparagine). Residue E113 is the Nucleophile of the active site. E205 functions as the Proton donor in the catalytic mechanism.

The protein belongs to the glycosyl hydrolase 11 (cellulase G) family.

It localises to the secreted. The catalysed reaction is Endohydrolysis of (1-&gt;4)-beta-D-xylosidic linkages in xylans.. The protein operates within glycan degradation; xylan degradation. Its activity is regulated as follows. Retains an activity of 52.5% in the presence of 5 mM SDS. Functionally, endo-1,4-beta-xylanase involved in the hydrolysis of xylan, a major structural heterogeneous polysaccharide found in plant biomass representing the second most abundant polysaccharide in the biosphere, after cellulose. Is an alkali-tolerant enzyme, exhibiting 50.6% of activity at pH 9.0, and 26.9% even at pH 10.0. This is Endo-1,4-beta-xylanase 11A from Humicola insolens (Soft-rot fungus).